Consider the following 601-residue polypeptide: Arginine--tRNA ligase (601 aa).

The 'HIGH' region signature appears at 135 to 145 (ANPTGPLHLGH).

Belongs to the class-I aminoacyl-tRNA synthetase family. As to quaternary structure, monomer.

It is found in the cytoplasm. It catalyses the reaction tRNA(Arg) + L-arginine + ATP = L-arginyl-tRNA(Arg) + AMP + diphosphate. The protein is Arginine--tRNA ligase of Gloeobacter violaceus (strain ATCC 29082 / PCC 7421).